We begin with the raw amino-acid sequence, 207 residues long: Large ribosomal subunit protein uL4 (207 aa).

The segment at 45–78 is disordered; that stretch reads RQGTHAVKNRSARRGGGRKPWRQKGTGRARQGSI. The segment covering 51-71 has biased composition (basic residues); sequence VKNRSARRGGGRKPWRQKGTG.

Belongs to the universal ribosomal protein uL4 family. As to quaternary structure, part of the 50S ribosomal subunit.

Functionally, one of the primary rRNA binding proteins, this protein initially binds near the 5'-end of the 23S rRNA. It is important during the early stages of 50S assembly. It makes multiple contacts with different domains of the 23S rRNA in the assembled 50S subunit and ribosome. Forms part of the polypeptide exit tunnel. This is Large ribosomal subunit protein uL4 from Lactiplantibacillus plantarum (strain ATCC BAA-793 / NCIMB 8826 / WCFS1) (Lactobacillus plantarum).